The primary structure comprises 285 residues: Sulfotransferase 2A2 (285 aa).

3'-phosphoadenylyl sulfate contacts are provided by lysine 44, serine 45, glycine 46, threonine 47, asparagine 48, and tryptophan 49. Histidine 99 acts as the Proton acceptor in catalysis. Residues arginine 121, serine 129, tyrosine 184, serine 218, methionine 223, arginine 247, lysine 248, and glycine 249 each contribute to the 3'-phosphoadenylyl sulfate site.

Belongs to the sulfotransferase 1 family.

It is found in the cytoplasm. The enzyme catalyses an alcohol + 3'-phosphoadenylyl sulfate = an alkyl sulfate + adenosine 3',5'-bisphosphate + H(+). Functionally, sulfotransferase that utilizes 3'-phospho-5'-adenylyl sulfate (PAPS) as sulfonate donor to catalyze the sulfate conjugation of a potential wide variety of acceptor molecules bearing a hydroxyl group. Sulfonation increases the water solubility of most compounds, and therefore their renal excretion, but it can also result in bioactivation to form active metabolites. The polypeptide is Sulfotransferase 2A2 (Mus musculus (Mouse)).